Here is a 144-residue protein sequence, read N- to C-terminus: Large ribosomal subunit protein uL11 (144 aa).

It belongs to the universal ribosomal protein uL11 family. As to quaternary structure, part of the ribosomal stalk of the 50S ribosomal subunit. Interacts with L10 and the large rRNA to form the base of the stalk. L10 forms an elongated spine to which L12 dimers bind in a sequential fashion forming a multimeric L10(L12)X complex. One or more lysine residues are methylated.

Forms part of the ribosomal stalk which helps the ribosome interact with GTP-bound translation factors. This chain is Large ribosomal subunit protein uL11, found in Neisseria meningitidis serogroup B (strain ATCC BAA-335 / MC58).